Here is a 1700-residue protein sequence, read N- to C-terminus: uncharacterized protein (1700 aa).

Residues 986-1006 (APITQYPVLCYLLYLLSYYLV) traverse the membrane as a helical segment. Coiled coils occupy residues 1246 to 1278 (DQNA…REIK) and 1657 to 1684 (QDMD…IEGD). The tract at residues 1650–1700 (DTEPDIMQDMDGEPQEADELEDLKEEAESLDIEGDYFAEEDEDYAQEDFIE) is disordered. A compositionally biased stretch (acidic residues) spans 1651-1700 (TEPDIMQDMDGEPQEADELEDLKEEAESLDIEGDYFAEEDEDYAQEDFIE).

It localises to the host membrane. It is found in the virion. This is an uncharacterized protein from Acanthamoeba polyphaga (Amoeba).